The sequence spans 400 residues: MSSKLVLVLNCGSSSLKFAIIDAVNGEEYLSGLAECFHLPEARIKWKMDGNKQEAALGAGAAHSEALNFIVNTILAQKPELSAQLTAIGHRIVHGGEKYTSSVVIDESVIQGIKDAASFAPLHNPAHLIGIEEALKSFPQLKDKNVAVFDTAFHQTMPEESYLYALPYNLYKEHGIRRYGAHGTSHFYVTQEAAKMLNKPVEELNIITCHLGNGGSVSAIRNGKCVDTSMGLTPLEGLVMGTRSGDIDPAIIFHLHDTLGMSVDAINKLLTKESGLLGLTEVTSDCRYVEDNYATKEDAKRAMDVYCHRLAKYIGAYTALMDGRLDAVVFTGGIGENAAMVRELSLGKLGVLGFEVDHERNLAARFGKSGFINKEGTRPAVVIPTNEELVIAQDASRLTA.

Asn10 serves as a coordination point for Mg(2+). Lys17 serves as a coordination point for ATP. A substrate-binding site is contributed by Arg91. The Proton donor/acceptor role is filled by Asp150. ATP contacts are provided by residues 210 to 214, 285 to 287, and 333 to 337; these read HLGNG, DCR, and GIGEN. Position 387 (Glu387) interacts with Mg(2+).

It belongs to the acetokinase family. In terms of assembly, homodimer. Requires Mg(2+) as cofactor. The cofactor is Mn(2+).

It is found in the cytoplasm. It carries out the reaction acetate + ATP = acetyl phosphate + ADP. The protein operates within metabolic intermediate biosynthesis; acetyl-CoA biosynthesis; acetyl-CoA from acetate: step 1/2. Catalyzes the formation of acetyl phosphate from acetate and ATP. Can also catalyze the reverse reaction. The sequence is that of Acetate kinase from Escherichia coli O157:H7.